A 212-amino-acid polypeptide reads, in one-letter code: Adenylate kinase (212 aa).

10–15 contributes to the ATP binding site; the sequence is GAGKGT. Positions 30–59 are NMP; sequence STGDMFRAAIANQTEMGVLAKSYIDKGELV. Residues Thr31, Arg36, 57 to 59, 86 to 89, and Gln93 each bind AMP; these read ELV and GYPR. The LID stretch occupies residues 127–159; that stretch reads GRIIHRETGETFHKVFNPPADYKEEDYYQREDD. Residues Arg128 and 137–138 contribute to the ATP site; that span reads TF. Positions 156 and 167 each coordinate AMP. Gln195 contacts ATP.

The protein belongs to the adenylate kinase family. As to quaternary structure, monomer.

The protein localises to the cytoplasm. It catalyses the reaction AMP + ATP = 2 ADP. The protein operates within purine metabolism; AMP biosynthesis via salvage pathway; AMP from ADP: step 1/1. Functionally, catalyzes the reversible transfer of the terminal phosphate group between ATP and AMP. Plays an important role in cellular energy homeostasis and in adenine nucleotide metabolism. The polypeptide is Adenylate kinase (Streptococcus sanguinis (strain SK36)).